A 67-amino-acid chain; its full sequence is Putative ATP synthase subunit epsilon, mitochondrial (67 aa).

The protein belongs to the eukaryotic ATPase epsilon family. F-type ATPases have 2 components, CF(1) - the catalytic core - and CF(0) - the membrane proton channel. CF(1) has five subunits: alpha(3), beta(3), gamma(1), delta(1), epsilon(1). CF(0) seems to have nine subunits: a, b, c, d, e, f, g, F6 and 8 (or A6L).

The protein localises to the mitochondrion. It localises to the mitochondrion inner membrane. Mitochondrial membrane ATP synthase (F(1)F(0) ATP synthase or Complex V) produces ATP from ADP in the presence of a proton gradient across the membrane which is generated by electron transport complexes of the respiratory chain. F-type ATPases consist of two structural domains, F(1) - containing the extramembraneous catalytic core, and F(0) - containing the membrane proton channel, linked together by a central stalk and a peripheral stalk. During catalysis, ATP synthesis in the catalytic domain of F(1) is coupled via a rotary mechanism of the central stalk subunits to proton translocation. Part of the complex F(1) domain and of the central stalk which is part of the complex rotary element. Rotation of the central stalk against the surrounding alpha(3)beta(3) subunits leads to hydrolysis of ATP in three separate catalytic sites on the beta subunits. This chain is Putative ATP synthase subunit epsilon, mitochondrial (atp15), found in Schizosaccharomyces pombe (strain 972 / ATCC 24843) (Fission yeast).